The following is a 512-amino-acid chain: Maturase K (512 aa).

This sequence belongs to the intron maturase 2 family. MatK subfamily.

It localises to the plastid. The protein localises to the chloroplast. In terms of biological role, usually encoded in the trnK tRNA gene intron. Probably assists in splicing its own and other chloroplast group II introns. The protein is Maturase K of Lemna minuta (Least duckweed).